A 450-amino-acid polypeptide reads, in one-letter code: MSLLQFSGLFVVWLLCTLFIATLTWFEFRRVRFNFNVFFSLLFLLTFFFGFPLTSVLVFRFDVGVAPPEILLQALLSAGCFYAVYYVTYKTRLRKRVADVPRRPLFTMNRVETNLTWVILMGIALVSVGIFFMHNGFLLFRLNSYSQIFSSEVSGVALKRFFYFFIPAMLVVYFLRQDSKAWLFFLVSTVAFGLLTYMIVGGTRANIIIAFAIFLFIGIIRGWISLWMLAAAGVLGIVGMFWLALKRYGMNVSGDEAFYTFLYLTRDTFSPWENLALLLQNYDNIDFQGLAPIVRDFYVFIPSWLWPGRPSMVLNSANYFTWEVLNNHSGLAISPTLIGSLVVMGGALFIPLGAIVVGLIIKWFDWLYELGNRETNRYKAAILHSFCFGAIFNMIVLAREGLDSFVSRVVFFIVVFGACLMIAKLLYWLFESAGLIHKRTKSSLRTQVEG.

A run of 11 helical transmembrane segments spans residues 6 to 26 (FSGL…LTWF), 37 to 57 (VFFS…TSVL), 63 to 83 (VGVA…CFYA), 118 to 138 (VILM…NGFL), 155 to 175 (GVAL…VYFL), 181 to 201 (AWLF…MIVG), 207 to 227 (IIIA…ISLW), 228 to 248 (MLAA…LKRY), 341 to 361 (LVVM…GLII), 378 to 398 (YKAA…IVLA), and 410 to 430 (VFFI…YWLF).

Belongs to the WzyE family. In terms of assembly, probably part of a complex composed of WzxE, WzyE and WzzE.

The protein localises to the cell inner membrane. The protein operates within bacterial outer membrane biogenesis; enterobacterial common antigen biosynthesis. Functionally, probably involved in the polymerization of enterobacterial common antigen (ECA) trisaccharide repeat units. The protein is Probable ECA polymerase of Escherichia coli O139:H28 (strain E24377A / ETEC).